The primary structure comprises 230 residues: Ribonuclease 3 (230 aa).

Positions 10–133 (DPRLLSRIGY…IIGAIYLDSS (124 aa)) constitute an RNase III domain. Glu46 is a binding site for Mg(2+). Residue Asp50 is part of the active site. Mg(2+) contacts are provided by Asp119 and Glu122. The active site involves Glu122. The DRBM domain maps to 161 to 230 (DPKSRLQEYL…AAEILKLLEQ (70 aa)).

It belongs to the ribonuclease III family. As to quaternary structure, homodimer. Requires Mg(2+) as cofactor.

Its subcellular location is the cytoplasm. The enzyme catalyses Endonucleolytic cleavage to 5'-phosphomonoester.. In terms of biological role, digests double-stranded RNA. Involved in the processing of primary rRNA transcript to yield the immediate precursors to the large and small rRNAs (23S and 16S). Processes some mRNAs, and tRNAs when they are encoded in the rRNA operon. Processes pre-crRNA and tracrRNA of type II CRISPR loci if present in the organism. This chain is Ribonuclease 3, found in Acinetobacter baumannii (strain SDF).